Consider the following 175-residue polypeptide: CEN-like protein 4 (175 aa).

Belongs to the phosphatidylethanolamine-binding protein family. In terms of tissue distribution, expressed in vegetative axillary meristems but not in the main shoot meristem.

It is found in the cytoplasm. Its function is as follows. May form complexes with phosphorylated ligands by interfering with kinases and their effectors. In Nicotiana tabacum (Common tobacco), this protein is CEN-like protein 4 (CET4).